The following is a 182-amino-acid chain: uncharacterized protein (182 aa).

Disordered stretches follow at residues 1-49 (MAAP…DGGS) and 126-171 (QGGH…VHAQ). Residues 17–39 (ELLEKAARLERGPPPRGDPEAVG) are compositionally biased toward basic and acidic residues.

This is an uncharacterized protein from Homo sapiens (Human).